A 1574-amino-acid chain; its full sequence is Plexin-C1 (1574 aa).

Residues 1-34 (MEVSRRKTPPRPPYPAAPLPLIAYLLALAAPARG) form the signal peptide. The 418-residue stretch at 35–452 (ADEPVWRSEQ…AGKEVRRIPV (418 aa)) folds into the Sema domain. The Extracellular segment spans residues 35–950 (ADEPVWRSEQ…YVEQESVPST (916 aa)). Cysteine 64 and cysteine 87 are disulfide-bonded. Asparagine 86, asparagine 143, and asparagine 149 each carry an N-linked (GlcNAc...) asparagine glycan. Cysteine 156 and cysteine 194 are oxidised to a cystine. A glycan (N-linked (GlcNAc...) asparagine) is linked at asparagine 252. Cysteine 283 and cysteine 329 are joined by a disulfide. N-linked (GlcNAc...) asparagine glycosylation is found at asparagine 386 and asparagine 407. 4 cysteine pairs are disulfide-bonded: cysteine 455–cysteine 472, cysteine 461–cysteine 506, cysteine 464–cysteine 481, and cysteine 475–cysteine 487. N-linked (GlcNAc...) asparagine glycosylation is found at asparagine 694, asparagine 773, and asparagine 802. The chain crosses the membrane as a helical span at residues 951–971 (WYFLIALPILLAIVIVVAVVV). At 972 to 1574 (TRYKSKELSR…FDEKKKCKWM (603 aa)) the chain is on the cytoplasmic side. Residue serine 984 is modified to Phosphoserine.

This sequence belongs to the plexin family. Monomer. Homodimer. Interacts with SEMA7A. In terms of tissue distribution, detected on dendritic cells, skin Langerhans cells and neutrophils (at protein level).

The protein resides in the membrane. Its function is as follows. Receptor for SEMA7A, for vaccinia virus semaphorin A39R and for herpesvirus Sema protein. Binding of semaphorins triggers cellular responses leading to the rearrangement of the cytoskeleton and to secretion of IL6 and IL8. In Mus musculus (Mouse), this protein is Plexin-C1 (Plxnc1).